The sequence spans 209 residues: Urease accessory protein UreG (209 aa).

18–25 (GPVGSGKT) provides a ligand contact to GTP.

Belongs to the SIMIBI class G3E GTPase family. UreG subfamily. In terms of assembly, homodimer. UreD, UreF and UreG form a complex that acts as a GTP-hydrolysis-dependent molecular chaperone, activating the urease apoprotein by helping to assemble the nickel containing metallocenter of UreC. The UreE protein probably delivers the nickel.

It is found in the cytoplasm. In terms of biological role, facilitates the functional incorporation of the urease nickel metallocenter. This process requires GTP hydrolysis, probably effectuated by UreG. The protein is Urease accessory protein UreG of Cupriavidus pinatubonensis (strain JMP 134 / LMG 1197) (Cupriavidus necator (strain JMP 134)).